The chain runs to 143 residues: Transcriptional regulator MraZ (143 aa).

SpoVT-AbrB domains are found at residues 5–47 (SHTP…PMAE) and 76–119 (AADD…DAQR).

The protein belongs to the MraZ family. In terms of assembly, forms oligomers.

It localises to the cytoplasm. The protein resides in the nucleoid. The chain is Transcriptional regulator MraZ from Frankia alni (strain DSM 45986 / CECT 9034 / ACN14a).